The primary structure comprises 54 residues: ATP synthase F(0) complex subunit 8 (54 aa).

The helical transmembrane segment at 9-29 threads the bilayer; the sequence is WFMILFFSWVIFLTIIPTKII. Residues 35-54 form a disordered region; it reads NDPTQVDAKEHKNDTWNWPW.

It belongs to the ATPase protein 8 family. As to quaternary structure, component of the ATP synthase complex composed at least of ATP5F1A/subunit alpha, ATP5F1B/subunit beta, ATP5MC1/subunit c (homooctomer), MT-ATP6/subunit a, MT-ATP8/subunit 8, ATP5ME/subunit e, ATP5MF/subunit f, ATP5MG/subunit g, ATP5MK/subunit k, ATP5MJ/subunit j, ATP5F1C/subunit gamma, ATP5F1D/subunit delta, ATP5F1E/subunit epsilon, ATP5PF/subunit F6, ATP5PB/subunit b, ATP5PD/subunit d, ATP5PO/subunit OSCP. ATP synthase complex consists of a soluble F(1) head domain (subunits alpha(3) and beta(3)) - the catalytic core - and a membrane F(0) domain - the membrane proton channel (subunits c, a, 8, e, f, g, k and j). These two domains are linked by a central stalk (subunits gamma, delta, and epsilon) rotating inside the F1 region and a stationary peripheral stalk (subunits F6, b, d, and OSCP).

Its subcellular location is the mitochondrion membrane. Functionally, subunit 8, of the mitochondrial membrane ATP synthase complex (F(1)F(0) ATP synthase or Complex V) that produces ATP from ADP in the presence of a proton gradient across the membrane which is generated by electron transport complexes of the respiratory chain. ATP synthase complex consist of a soluble F(1) head domain - the catalytic core - and a membrane F(1) domain - the membrane proton channel. These two domains are linked by a central stalk rotating inside the F(1) region and a stationary peripheral stalk. During catalysis, ATP synthesis in the catalytic domain of F(1) is coupled via a rotary mechanism of the central stalk subunits to proton translocation. In vivo, can only synthesize ATP although its ATP hydrolase activity can be activated artificially in vitro. Part of the complex F(0) domain. The polypeptide is ATP synthase F(0) complex subunit 8 (Danio rerio (Zebrafish)).